Reading from the N-terminus, the 101-residue chain is Small ribosomal subunit protein uS14 (101 aa).

This sequence belongs to the universal ribosomal protein uS14 family. As to quaternary structure, part of the 30S ribosomal subunit. Contacts proteins S3 and S10.

Binds 16S rRNA, required for the assembly of 30S particles and may also be responsible for determining the conformation of the 16S rRNA at the A site. This chain is Small ribosomal subunit protein uS14, found in Zymomonas mobilis subsp. mobilis (strain ATCC 31821 / ZM4 / CP4).